The chain runs to 271 residues: Zinc finger protein 501 (271 aa).

9 consecutive C2H2-type zinc fingers follow at residues 22-44 (SKCS…QRIH), 50-72 (YVCS…LRIH), 78-100 (YKCN…LRIH), 106-128 (YKCN…QRIH), 134-156 (YKCA…QRSH), 162-184 (FKCN…QRIH), 190-212 (YTCT…ERTH), 218-240 (YKCS…YRIH), and 246-268 (YECF…QRLH).

The protein belongs to the krueppel C2H2-type zinc-finger protein family.

It localises to the nucleus. The protein resides in the nucleolus. Its function is as follows. May be involved in transcriptional regulation. Essential for Golgi structural integrity. This is Zinc finger protein 501 (ZNF501) from Pongo abelii (Sumatran orangutan).